The chain runs to 719 residues: ATP-dependent RNA helicase p62 (719 aa).

Residues 94–234 (AQSQRAFRDS…GSQDLPMRPV (141 aa)) form a disordered region. 2 stretches are compositionally biased toward basic and acidic residues: residues 99–108 (AFRDSSKPDS) and 137–171 (EEIK…DRRG). Residues 172 to 188 (GGGGGNRFGGGGGGGDY) show a composition bias toward gly residues. Residues 194–205 (GRVEKRRDDRGG) show a composition bias toward basic and acidic residues. Over residues 206 to 226 (GNRFGGGGGFGDRRGGGGGGS) the composition is skewed to gly residues. The Q motif signature appears at 281–309 (QDFSEVHLPDYVMKEIRRQGYKAPTAIQA). The Helicase ATP-binding domain maps to 312 to 487 (WPIAMSGSNF…EDFLGNYIQI (176 aa)). 325–332 (AKTGSGKT) contacts ATP. The DEAD box motif lies at 435–438 (DEAD). The Helicase C-terminal domain occupies 519–664 (LLSDIYDTSE…EINPALENLA (146 aa)). A disordered region spans residues 689 to 719 (GGGFKKGSLSNGRGFGGGGGGGGEGRHSRFD). Residues 701–711 (RGFGGGGGGGG) are compositionally biased toward gly residues.

Belongs to the DEAD box helicase family. DDX5/DBP2 subfamily. In terms of assembly, interacts with Fmr1 to form the RNA-induced silencing complex (RISC), a ribonucleoprotein (RNP) complex involved in translation regulation, other components of the complex are RpL5, RpL11, AGO2 and Dcr-1.

It localises to the nucleus. The protein localises to the nucleolus. The protein resides in the cytoplasm. Its subcellular location is the cytosol. The enzyme catalyses ATP + H2O = ADP + phosphate + H(+). In terms of biological role, as an RNA helicase, unwinds RNA and alters RNA structures through ATP binding and hydrolysis. Involved in multiple cellular processes, including pre-mRNA splicing, alternative splicing, rRNA processing and miRNA processing, as well as transcription regulation. Plays a role in innate immunity. Specifically restricts bunyavirus infection, including Rift Valley fever virus (RVFV) or La Crosse virus (LACV), but not vesicular stomatitis virus (VSV), in an interferon- and DROSHA-independent manner. This Drosophila melanogaster (Fruit fly) protein is ATP-dependent RNA helicase p62 (Rm62).